Here is a 305-residue protein sequence, read N- to C-terminus: Outer membrane protein assembly factor BamD (305 aa).

The N-terminal stretch at 1-24 is a signal peptide; sequence MLRIFQGRPAVTIAAVLVAASVAG. A lipid anchor (N-palmitoyl cysteine) is attached at Cys-25. Cys-25 carries S-diacylglycerol cysteine lipidation. TPR repeat units lie at residues 41–74, 78–111, 113–136, and 174–207; these read VELLYSTGADRLDRGNWNEAVDYFREVERQHPYS, RRSILMTGYAHYMGNQYAEAIGDADRFISLYPGN, SAQYAFYLKAICYFEQIVDVNRDQ, and AGKEMAIGRWYLKNGQTLAAIGRFKAVIERHQTT.

Belongs to the BamD family. Part of the Bam complex.

The protein localises to the cell outer membrane. Functionally, part of the outer membrane protein assembly complex, which is involved in assembly and insertion of beta-barrel proteins into the outer membrane. The protein is Outer membrane protein assembly factor BamD of Caulobacter vibrioides (strain ATCC 19089 / CIP 103742 / CB 15) (Caulobacter crescentus).